We begin with the raw amino-acid sequence, 444 residues long: Tubulin beta-4A chain (444 aa).

The MREI motif motif lies at 1 to 4 (MREI). GTP is bound by residues glutamine 11, glutamate 69, serine 138, glycine 142, threonine 143, and glycine 144. Position 69 (glutamate 69) interacts with Mg(2+). Serine 172 carries the post-translational modification Phosphoserine; by CDK1. GTP-binding residues include asparagine 204 and asparagine 226. Glutamate 436 is subject to 5-glutamyl polyglutamate.

The protein belongs to the tubulin family. In terms of assembly, dimer of alpha and beta chains. A typical microtubule is a hollow water-filled tube with an outer diameter of 25 nm and an inner diameter of 15 nM. Alpha-beta heterodimers associate head-to-tail to form protofilaments running lengthwise along the microtubule wall with the beta-tubulin subunit facing the microtubule plus end conferring a structural polarity. Microtubules usually have 13 protofilaments but different protofilament numbers can be found in some organisms and specialized cells. Requires Mg(2+) as cofactor. In terms of processing, some glutamate residues at the C-terminus are polyglycylated, resulting in polyglycine chains on the gamma-carboxyl group. Glycylation is mainly limited to tubulin incorporated into axonemes (cilia and flagella) whereas glutamylation is prevalent in neuronal cells, centrioles, axonemes, and the mitotic spindle. Both modifications can coexist on the same protein on adjacent residues, and lowering polyglycylation levels increases polyglutamylation, and reciprocally. Cilia and flagella glycylation is required for their stability and maintenance. Flagella glycylation controls sperm motility. Post-translationally, some glutamate residues at the C-terminus are polyglutamylated, resulting in polyglutamate chains on the gamma-carboxyl group. Polyglutamylation plays a key role in microtubule severing by spastin (SPAST). SPAST preferentially recognizes and acts on microtubules decorated with short polyglutamate tails: severing activity by SPAST increases as the number of glutamates per tubulin rises from one to eight, but decreases beyond this glutamylation threshold. Glutamylation is also involved in cilia motility. Phosphorylated on Ser-172 by CDK1 during the cell cycle, from metaphase to telophase, but not in interphase. This phosphorylation inhibits tubulin incorporation into microtubules.

It localises to the cytoplasm. The protein resides in the cytoskeleton. Its function is as follows. Tubulin is the major constituent of microtubules, a cylinder consisting of laterally associated linear protofilaments composed of alpha- and beta-tubulin heterodimers. Microtubules grow by the addition of GTP-tubulin dimers to the microtubule end, where a stabilizing cap forms. Below the cap, tubulin dimers are in GDP-bound state, owing to GTPase activity of alpha-tubulin. The polypeptide is Tubulin beta-4A chain (TUBB4A) (Bos taurus (Bovine)).